Reading from the N-terminus, the 91-residue chain is Large ribosomal subunit protein eL37 (91 aa).

Residues Cys19, Cys22, Cys34, and Cys37 each contribute to the Zn(2+) site. A C4-type zinc finger spans residues 19–37; sequence CKRCGKSSFHIQKKRCASC.

The protein belongs to the eukaryotic ribosomal protein eL37 family. The cofactor is Zn(2+).

Functionally, binds to the 23S rRNA. This chain is Large ribosomal subunit protein eL37, found in Caenorhabditis elegans.